Reading from the N-terminus, the 326-residue chain is Probable cell division protein WhiA (326 aa).

The H-T-H motif DNA-binding region spans 275–308 (SLEELGALADPPLTKDAIAGRIRRLLALADKRAR).

This sequence belongs to the WhiA family.

Its function is as follows. Involved in cell division and chromosome segregation. The protein is Probable cell division protein WhiA of Salinispora arenicola (strain CNS-205).